Consider the following 261-residue polypeptide: uncharacterized protein (261 aa).

Residues 16–147 (KQTSLVLQNL…QTNVNVLRSQ (132 aa)) are a coiled coil.

The protein resides in the cytoplasm. This is an uncharacterized protein from Schizosaccharomyces pombe (strain 972 / ATCC 24843) (Fission yeast).